We begin with the raw amino-acid sequence, 331 residues long: Glycerol-3-phosphate dehydrogenase [NAD(P)+] (331 aa).

NADPH-binding residues include serine 11, phenylalanine 12, arginine 32, and lysine 106. Sn-glycerol 3-phosphate-binding residues include lysine 106, glycine 134, and serine 136. Residue alanine 138 participates in NADPH binding. 5 residues coordinate sn-glycerol 3-phosphate: lysine 189, aspartate 242, serine 252, arginine 253, and asparagine 254. The Proton acceptor role is filled by lysine 189. Residue arginine 253 participates in NADPH binding. NADPH-binding residues include valine 277 and glutamate 279.

This sequence belongs to the NAD-dependent glycerol-3-phosphate dehydrogenase family.

It localises to the cytoplasm. The catalysed reaction is sn-glycerol 3-phosphate + NAD(+) = dihydroxyacetone phosphate + NADH + H(+). It carries out the reaction sn-glycerol 3-phosphate + NADP(+) = dihydroxyacetone phosphate + NADPH + H(+). It functions in the pathway membrane lipid metabolism; glycerophospholipid metabolism. In terms of biological role, catalyzes the reduction of the glycolytic intermediate dihydroxyacetone phosphate (DHAP) to sn-glycerol 3-phosphate (G3P), the key precursor for phospholipid synthesis. This chain is Glycerol-3-phosphate dehydrogenase [NAD(P)+], found in Clostridium perfringens (strain ATCC 13124 / DSM 756 / JCM 1290 / NCIMB 6125 / NCTC 8237 / Type A).